Reading from the N-terminus, the 114-residue chain is UPF0342 protein NWMN_1737 (114 aa).

This sequence belongs to the UPF0342 family.

The protein is UPF0342 protein NWMN_1737 of Staphylococcus aureus (strain Newman).